Reading from the N-terminus, the 382-residue chain is D-alanine--D-alanine ligase (382 aa).

Positions 161-372 (KVVFESAGLH…YAELIDELIH (212 aa)) constitute an ATP-grasp domain. 193–248 (VDRLGFPVFVKPARAGSSMGISKVDSLEGLDAAIEEARRHDLKLVIEAGIVGREIE) serves as a coordination point for ATP. 3 residues coordinate Mg(2+): Asp326, Glu339, and Asn341.

The protein belongs to the D-alanine--D-alanine ligase family. It depends on Mg(2+) as a cofactor. Mn(2+) serves as cofactor.

The protein resides in the cytoplasm. It carries out the reaction 2 D-alanine + ATP = D-alanyl-D-alanine + ADP + phosphate + H(+). Its pathway is cell wall biogenesis; peptidoglycan biosynthesis. Cell wall formation. The polypeptide is D-alanine--D-alanine ligase (Pseudarthrobacter chlorophenolicus (strain ATCC 700700 / DSM 12829 / CIP 107037 / JCM 12360 / KCTC 9906 / NCIMB 13794 / A6) (Arthrobacter chlorophenolicus)).